Here is a 209-residue protein sequence, read N- to C-terminus: Ubiquitin-conjugating enzyme E2 S (209 aa).

In terms of domain architecture, UBC core spans 14–160 (QTIRQVMREL…ARMMTEIHAQ (147 aa)). Residue cysteine 98 is the Glycyl thioester intermediate of the active site. A disordered region spans residues 165 to 194 (GVGAASDAKDDDGPSTKKHAGLDKKLQDKK). Residues 171–194 (DAKDDDGPSTKKHAGLDKKLQDKK) show a composition bias toward basic and acidic residues.

Belongs to the ubiquitin-conjugating enzyme family.

It catalyses the reaction S-ubiquitinyl-[E1 ubiquitin-activating enzyme]-L-cysteine + [E2 ubiquitin-conjugating enzyme]-L-cysteine = [E1 ubiquitin-activating enzyme]-L-cysteine + S-ubiquitinyl-[E2 ubiquitin-conjugating enzyme]-L-cysteine.. It functions in the pathway protein modification; protein ubiquitination. Its function is as follows. Catalyzes the covalent attachment of ubiquitin to other proteins. Acts as an essential factor of the anaphase promoting complex/cyclosome (APC/C), a cell cycle-regulated ubiquitin ligase that controls progression through mitosis. Acts by specifically elongating polyubiquitin chains initiated by the E2 enzyme vih/UbcH10 on APC/C substrates, enhancing the degradation of APC/C substrates by the proteasome and promoting mitotic exit. The polypeptide is Ubiquitin-conjugating enzyme E2 S (Drosophila persimilis (Fruit fly)).